The primary structure comprises 187 residues: BLOC-1-related complex subunit 8 homolog (187 aa).

The interval 165–187 is disordered; it reads QSQHETANDTRQGYNDDANNDQD.

It belongs to the BORCS8 family.

The protein localises to the lysosome membrane. In terms of biological role, may participate in the coupling of lysosomes to microtubule plus-end-directed kinesin motor. The sequence is that of BLOC-1-related complex subunit 8 homolog from Nematostella vectensis (Starlet sea anemone).